The sequence spans 109 residues: Peptide chaperone MftB (109 aa).

The protein belongs to the peptide chaperone MftB family.

Its function is as follows. Peptide chaperone involved in the biosynthesis of the enzyme cofactor mycofactocin (MFT). Binds MftA and MftC with high affinity, and is essential for MftC activity on MftA, likely via the formation of a ternary complex. In Mycobacterium tuberculosis (strain ATCC 25618 / H37Rv), this protein is Peptide chaperone MftB.